We begin with the raw amino-acid sequence, 660 residues long: Cullin-associated NEDD8-dissociated protein 1 homolog (660 aa).

Residue lysine 16 forms a Glycyl lysine isopeptide (Lys-Gly) (interchain with G-Cter in NEDD8) linkage. The segment at threonine 339 to glutamate 364 is disordered. Residues isoleucine 351–proline 363 are compositionally biased toward acidic residues.

Interacts with unneddylated cullin CDC53. In terms of processing, neddylated at Lys-16.

Functionally, assembly factor of SCF (SKP1-CUL1-F-box protein) E3 ubiquitin ligase complexes that promotes the exchange of the substrate-recognition F-box subunit in SCF complexes, thereby playing a key role in the cellular repertoire of SCF complexes. Acts as a F-box protein exchange factor. Involved in the aging process. Longevity-assurance protein. The protein is Cullin-associated NEDD8-dissociated protein 1 homolog (LAG2) of Saccharomyces cerevisiae (strain ATCC 204508 / S288c) (Baker's yeast).